The following is a 107-amino-acid chain: MKTADSSLLADIREVNLSYLLLAQRMLRDDYAASMFRLGFSNEVADILMRLSPAQLVKLANSSSLLCRFRFDDYSLLSALTQDVLGGALQQAHATILLARQPVEELA.

The protein belongs to the FlhD family. In terms of assembly, homodimer; disulfide-linked. Forms a heterohexamer composed of two FlhC and four FlhD subunits. Each FlhC binds a FlhD dimer, forming a heterotrimer, and a hexamer assembles by dimerization of two heterotrimers.

The protein resides in the cytoplasm. Functions in complex with FlhC as a master transcriptional regulator that regulates transcription of several flagellar and non-flagellar operons by binding to their promoter region. Activates expression of class 2 flagellar genes, including fliA, which is a flagellum-specific sigma factor that turns on the class 3 genes. Also regulates genes whose products function in a variety of physiological pathways. This chain is Flagellar transcriptional regulator FlhD, found in Bordetella pertussis (strain Tohama I / ATCC BAA-589 / NCTC 13251).